Consider the following 169-residue polypeptide: RNA annealing protein YRA2 (169 aa).

The region spanning 45 to 119 (KRLRFTNVPL…GTVTVEIFEQ (75 aa)) is the RRM domain. The segment at 119-169 (QERRPDRRRRTQRDNRRGNGRGSRGSHYKRQDRPAMEDELNAELEDYMKSS) is disordered.

Belongs to the YRA1 family. As to quaternary structure, associates with mRNPs.

The protein resides in the nucleus. Its function is as follows. Involved in export of poly(A) mRNAs from the nucleus. Recruited to the coding sequences as well as poly-A sites of active genes. This chain is RNA annealing protein YRA2 (YRA2), found in Zygosaccharomyces rouxii (strain ATCC 2623 / CBS 732 / NBRC 1130 / NCYC 568 / NRRL Y-229).